A 260-amino-acid chain; its full sequence is Ribosomal protein L11 methyltransferase (260 aa).

S-adenosyl-L-methionine-binding residues include T119, G140, D162, and N203.

It belongs to the methyltransferase superfamily. PrmA family.

The protein resides in the cytoplasm. It catalyses the reaction L-lysyl-[protein] + 3 S-adenosyl-L-methionine = N(6),N(6),N(6)-trimethyl-L-lysyl-[protein] + 3 S-adenosyl-L-homocysteine + 3 H(+). Functionally, methylates ribosomal protein L11. The protein is Ribosomal protein L11 methyltransferase of Thermosipho africanus (strain TCF52B).